The sequence spans 186 residues: Elongation factor P (186 aa).

Belongs to the elongation factor P family.

It localises to the cytoplasm. The protein operates within protein biosynthesis; polypeptide chain elongation. Functionally, involved in peptide bond synthesis. Stimulates efficient translation and peptide-bond synthesis on native or reconstituted 70S ribosomes in vitro. Probably functions indirectly by altering the affinity of the ribosome for aminoacyl-tRNA, thus increasing their reactivity as acceptors for peptidyl transferase. The polypeptide is Elongation factor P (Prochlorococcus marinus (strain MIT 9313)).